Consider the following 88-residue polypeptide: Gene 86 protein (88 aa).

The disordered stretch occupies residues 64–88; that stretch reads WRGNPSAYDDEVGDLEGFETQHSDY. Residues 71–80 show a composition bias toward acidic residues; sequence YDDEVGDLEG.

The sequence is that of Gene 86 protein (86) from Mycobacterium (Mycobacteriophage L5).